A 313-amino-acid chain; its full sequence is Ribosomal RNA small subunit methyltransferase H (313 aa).

Residues 33-35, Asp-53, Phe-80, Asp-101, and Gln-108 contribute to the S-adenosyl-L-methionine site; that span reads GGH. Residues 282–313 form a disordered region; that stretch reads LVHNKPLTPSEAEIEQNPRARSAKLRVAQKLA.

This sequence belongs to the methyltransferase superfamily. RsmH family.

The protein localises to the cytoplasm. It catalyses the reaction cytidine(1402) in 16S rRNA + S-adenosyl-L-methionine = N(4)-methylcytidine(1402) in 16S rRNA + S-adenosyl-L-homocysteine + H(+). In terms of biological role, specifically methylates the N4 position of cytidine in position 1402 (C1402) of 16S rRNA. The protein is Ribosomal RNA small subunit methyltransferase H of Magnetococcus marinus (strain ATCC BAA-1437 / JCM 17883 / MC-1).